The sequence spans 625 residues: MFGNNLNSTLIQDLDRLENRLREIPLEPGVYFLRDQNGEILYIGKSKKLRSRVRSYFRPSQPLSPRIALMVRQVTEIEFIVTDTEAESLALEANLIKQHQPHFNTLLKDDKKYPYICITWSETYPRIFITRKRRINNQKDRYYGPYVDTRLLRYTLHLIKRTFPLRQRPQPLFKDRPCLNYDIGRCPGVCQKLISPQDYRETLQKVAMIFQGRTGELLEKLATKMLAASENLDFEQAATIRDQIRGLQALNTDQKVSLPDDTVSRDAIALAKDEQHCCIQLFQVRSGRLVGRLGFFADSQSANEGEILQKVLEEHYLSVEGVEIPSEILLPCELPEGEVLAGWLREKKGRKVELTVPQRQSKADLLAMVEKNALYELEKTKRSADRDLQSLQDLAVILDLPALPHRIEGYDISHIQGSNAVASGVVFIDGVAANQHYRHYKIKNPEVKIGHSDDFASLAEVIRRRFRRYAENPDNIAESDDFPDLVMIDGGKGQLSAVVAVLGEMNLLEQVKVVSLAKQREEIFLPGESSPLETDKEQPGVQLLRRVRDEAHRFAVSFHRQQRMQKSRRSRLDEIPGLGFKRQKELLAHFHSLDYIREASLEQLQQVTGIGEQLAKEIYNYFHPR.

Residues 26–105 enclose the GIY-YIG domain; the sequence is LEPGVYFLRD…IKQHQPHFNT (80 aa). One can recognise a UVR domain in the interval 215-250; that stretch reads GELLEKLATKMLAASENLDFEQAATIRDQIRGLQAL.

It belongs to the UvrC family. Interacts with UvrB in an incision complex.

It is found in the cytoplasm. In terms of biological role, the UvrABC repair system catalyzes the recognition and processing of DNA lesions. UvrC both incises the 5' and 3' sides of the lesion. The N-terminal half is responsible for the 3' incision and the C-terminal half is responsible for the 5' incision. This chain is UvrABC system protein C, found in Microcystis aeruginosa (strain NIES-843 / IAM M-2473).